The sequence spans 649 residues: Glucan endo-1,3-beta-glucosidase btgC (649 aa).

2 disordered regions span residues 1-50 (MGDR…AHTH) and 110-224 (YHTT…AGGA). The Cytoplasmic segment spans residues 1–274 (MGDRSEQYGD…PRPSGASRKR (274 aa)). The span at 144–157 (GSSAALSAAGAPAG) shows a compositional bias: low complexity. Residues 198–208 (NPDDILDDGDD) show a composition bias toward acidic residues. The chain crosses the membrane as a helical; Signal-anchor for type II membrane protein span at residues 275 to 295 (GWIIGGILAFIVIGAIVGGAV). At 296–649 (GGTLGNRRSE…IPDCGGKTAA (354 aa)) the chain is on the extracellular side. Positions 301–329 (NRRSETASESSEVSADDDTETNGDLDKNS) are disordered. A compositionally biased stretch (acidic residues) spans 314-323 (SADDDTETNG). Residues asparagine 369, asparagine 392, and asparagine 420 are each glycosylated (N-linked (GlcNAc...) asparagine). The active-site Proton donor is glutamate 452. The Nucleophile role is filled by glutamate 551. Asparagine 596 carries an N-linked (GlcNAc...) asparagine glycan.

Belongs to the glycosyl hydrolase 17 family.

Its subcellular location is the cell membrane. It carries out the reaction Hydrolysis of (1-&gt;3)-beta-D-glucosidic linkages in (1-&gt;3)-beta-D-glucans.. In terms of biological role, glucanases play a role in cell expansion during growth, in cell-cell fusion during mating, and in spore release during sporulation. This enzyme may be involved in beta-glucan degradation. Active on laminarin and lichenan. The chain is Glucan endo-1,3-beta-glucosidase btgC (btgC) from Emericella nidulans (strain FGSC A4 / ATCC 38163 / CBS 112.46 / NRRL 194 / M139) (Aspergillus nidulans).